A 217-amino-acid chain; its full sequence is Oxygen-evolving enhancer protein 3-1, chloroplastic (217 aa).

Residues 1-68 constitute a chloroplast transit peptide; the sequence is MAQAMASMTG…GGALSQAARA (68 aa).

This sequence belongs to the PsbQ family.

It is found in the plastid. Its subcellular location is the chloroplast thylakoid membrane. The polypeptide is Oxygen-evolving enhancer protein 3-1, chloroplastic (PSBQ1) (Zea mays (Maize)).